An 87-amino-acid chain; its full sequence is FXYD domain-containing ion transport regulator 3 (87 aa).

An N-terminal signal peptide occupies residues 1–20 (MQKVTLGLLVFLAGFPVLDA). The Extracellular portion of the chain corresponds to 21–38 (NDLEDKNSPFYYDWHSLQ). The helical transmembrane segment at 39–59 (VGGLICAGVLCAMGIIIVMSA) threads the bilayer. The Cytoplasmic portion of the chain corresponds to 60–87 (KCKCKFGQKSGHHPGETPPLITPGSAQS). The segment at 66-87 (GQKSGHHPGETPPLITPGSAQS) is disordered.

This sequence belongs to the FXYD family. As to quaternary structure, regulatory subunit of the sodium/potassium-transporting ATPase which is composed of a catalytic alpha subunit, a non-catalytic beta subunit and an additional regulatory subunit. Interacts with catalytic alpha subunit ATP1A1. Also interacts with non-catalytic beta subunit ATP1B1. Interacts with the ATP1A1-ATP1B1, ATP1A2-ATP1B1 and ATP1A3-ATP1B1 NKA isozymes. Post-translationally, glutathionylated. As to expression, isoform 1: Expressed mainly in differentiated cells (at protein level). Isoform 2: Expressed mainly in undifferentiated cells (at protein level).

It is found in the cell membrane. Functionally, associates with and regulates the activity of the sodium/potassium-transporting ATPase (NKA) which transports Na(+) out of the cell and K(+) into the cell. Reduces glutathionylation of the NKA beta-1 subunit ATP1B1, thus reversing glutathionylation-mediated inhibition of ATP1B1. Induces a hyperpolarization-activated chloride current when expressed in Xenopus oocytes. In terms of biological role, decreases the apparent K+ and Na+ affinity of the sodium/potassium-transporting ATPase over a large range of membrane potentials. Its function is as follows. Decreases the apparent K+ affinity of the sodium/potassium-transporting ATPase only at slightly negative and positive membrane potentials and increases the apparent Na+ affinity over a large range of membrane potentials. This Homo sapiens (Human) protein is FXYD domain-containing ion transport regulator 3 (FXYD3).